Reading from the N-terminus, the 998-residue chain is MVVTKPATQRPRLPSVGRLGLVDPQAAERMAQLGWYDHDDQAHVDLLWALSRAPDPDAALLALVRLAETPDAGWDELGAALLTERPLRGRLFAVLGSSLALGDHLVAQPRSWKLLRGNVSLPTHDELCAMFTGCVDEALADPGSAMVRLRTLYRDRLLVLAALDLAATVEDEPVLPFTVVAAHLSDLADAALAAALRVAEHNVCGDRTPPRLAVIAMGKCGARELNYVSDVDVIFVGERADTVTTRVASEMMRLASEAFFQVDAGLRPEGRSGELVRTVESHIAYYQRWAKTWEFQALLKARAAVGDAELGRRYLDALMPMVWVACEREDFVVEVQAMRRRVEQLVPADVRGREIKLGSGGLRDVEFAVQLLQLVHGRSDESLHVASTVDALAALGQGGYIGREDAANLTASYEFLRLLEHRLQLQRLKRTHLLPEADDEEAVRWLARAAHIRPDGRHDAAGVLREELRHQNLRVSQLHAKLFYQPLLESIGPAGLEIRHGMTSEAAERQLAALGYEGPQSALKHMSALVNQSGRRGRVQSVLLPRLLNWMSYAPDPDGGLLAYRRLSEALAGESWYLSTLRDKPAVARRLMHVLGTSAYVPDLLMRAPRVIQDYGDGPSGPRLLETDPAAVARALVASASRYSDPVRAIAGARTLRRRELARVASADLLGMLEVTDVCKALTSVWVAVLQAALDAMIRANLPDDGPQRGKAPAAIAVIGMGRLGGAELGYGSDADVMFVCEPAPGVDDSAAVRWAASVAEQVRTLLGTPSVDPPLDVDANLRPEGRNGPLVRTLASYAACYEQWAQPWEIQALLRAHAVAGDAELGHRFLLMADKTRYPADGVSPEAVREIRRIKARVDAERLPRGADPNTHTKLGRGGLADIEWTVQLLQLLHAHEVPALHNTSTLECLDAIAEAGLVPADEVDLLRQAWLTATRARNALVLVRGKPTDQLPGPGRQLNAVAVAAGWPTDEGGEFLDNYLRVTRRAKAVVCKVFGS.

Positions 1–487 (MVVTKPATQR…LHAKLFYQPL (487 aa)) are adenylyl removase. Residues 492-998 (GPAGLEIRHG…KAVVCKVFGS (507 aa)) are adenylyl transferase.

It belongs to the GlnE family. Mg(2+) is required as a cofactor.

It catalyses the reaction [glutamine synthetase]-O(4)-(5'-adenylyl)-L-tyrosine + phosphate = [glutamine synthetase]-L-tyrosine + ADP. It carries out the reaction [glutamine synthetase]-L-tyrosine + ATP = [glutamine synthetase]-O(4)-(5'-adenylyl)-L-tyrosine + diphosphate. Its function is as follows. Involved in the regulation of glutamine synthetase GlnA, a key enzyme in the process to assimilate ammonia. When cellular nitrogen levels are high, the C-terminal adenylyl transferase (AT) inactivates GlnA by covalent transfer of an adenylyl group from ATP to specific tyrosine residue of GlnA, thus reducing its activity. Conversely, when nitrogen levels are low, the N-terminal adenylyl removase (AR) activates GlnA by removing the adenylyl group by phosphorolysis, increasing its activity. The regulatory region of GlnE binds the signal transduction protein PII (GlnB) which indicates the nitrogen status of the cell. This chain is Bifunctional glutamine synthetase adenylyltransferase/adenylyl-removing enzyme, found in Mycolicibacterium paratuberculosis (strain ATCC BAA-968 / K-10) (Mycobacterium paratuberculosis).